The sequence spans 563 residues: Inclusion body clearance protein IML2 (563 aa).

This sequence belongs to the IML2 family. In terms of assembly, interacts with lipid droplet proteins.

Its subcellular location is the cytoplasm. The protein resides in the nucleus. Its function is as follows. Inclusion body (IB) resident protein that interacts strongly with lipid droplet (LD) proteins. Involved in LD-mediated IB clearing after protein folding stress, probably by enabling access to the IBs of an LD-stored soluble sterol derivative that acts as a chaperone in inclusion clearing. The sequence is that of Inclusion body clearance protein IML2 from Schizosaccharomyces pombe (strain 972 / ATCC 24843) (Fission yeast).